Here is a 117-residue protein sequence, read N- to C-terminus: Large ribosomal subunit protein uL18 (117 aa).

The protein belongs to the universal ribosomal protein uL18 family. Part of the 50S ribosomal subunit; part of the 5S rRNA/L5/L18/L25 subcomplex. Contacts the 5S and 23S rRNAs.

Functionally, this is one of the proteins that bind and probably mediate the attachment of the 5S RNA into the large ribosomal subunit, where it forms part of the central protuberance. The chain is Large ribosomal subunit protein uL18 from Hydrogenovibrio crunogenus (strain DSM 25203 / XCL-2) (Thiomicrospira crunogena).